The following is a 238-amino-acid chain: RNA pyrophosphohydrolase (238 aa).

Positions 6-149 constitute a Nudix hydrolase domain; that stretch reads GFRPNVGIIL…KREVYQMALS (144 aa). Residues 38–59 carry the Nudix box motif; sequence GGIKYGETPEQAMYRELHEEVG. Positions 161–238 are disordered; it reads APLSPYGRGG…PDDTPSKDSL (78 aa). A compositionally biased stretch (basic and acidic residues) spans 171–181; sequence PHRERDGRDNR. The span at 188-199 shows a compositional bias: polar residues; it reads RNDQNTRGQRQP. A compositionally biased stretch (low complexity) spans 204–217; sequence VTTSTVIVETVITS.

The protein belongs to the Nudix hydrolase family. RppH subfamily. The cofactor is a divalent metal cation.

Functionally, accelerates the degradation of transcripts by removing pyrophosphate from the 5'-end of triphosphorylated RNA, leading to a more labile monophosphorylated state that can stimulate subsequent ribonuclease cleavage. This chain is RNA pyrophosphohydrolase, found in Ralstonia nicotianae (strain ATCC BAA-1114 / GMI1000) (Ralstonia solanacearum).